The following is a 320-amino-acid chain: Ribonuclease Z (320 aa).

His-63, His-65, Asp-67, His-68, His-141, Asp-212, and His-270 together coordinate Zn(2+). The active-site Proton acceptor is the Asp-67.

It belongs to the RNase Z family. As to quaternary structure, homodimer. Requires Zn(2+) as cofactor.

The catalysed reaction is Endonucleolytic cleavage of RNA, removing extra 3' nucleotides from tRNA precursor, generating 3' termini of tRNAs. A 3'-hydroxy group is left at the tRNA terminus and a 5'-phosphoryl group is left at the trailer molecule.. Functionally, zinc phosphodiesterase, which displays some tRNA 3'-processing endonuclease activity. Probably involved in tRNA maturation, by removing a 3'-trailer from precursor tRNA. This chain is Ribonuclease Z, found in Lacticaseibacillus casei (strain BL23) (Lactobacillus casei).